The primary structure comprises 263 residues: tRNA (guanine-N(1)-)-methyltransferase (263 aa).

S-adenosyl-L-methionine-binding positions include glycine 113 and 137 to 142 (LGDYVL).

This sequence belongs to the RNA methyltransferase TrmD family. In terms of assembly, homodimer.

Its subcellular location is the cytoplasm. It carries out the reaction guanosine(37) in tRNA + S-adenosyl-L-methionine = N(1)-methylguanosine(37) in tRNA + S-adenosyl-L-homocysteine + H(+). Specifically methylates guanosine-37 in various tRNAs. The protein is tRNA (guanine-N(1)-)-methyltransferase of Renibacterium salmoninarum (strain ATCC 33209 / DSM 20767 / JCM 11484 / NBRC 15589 / NCIMB 2235).